Here is a 347-residue protein sequence, read N- to C-terminus: UPF0284 protein M1425_0030 (347 aa).

It belongs to the UPF0284 family.

The sequence is that of UPF0284 protein M1425_0030 from Saccharolobus islandicus (strain M.14.25 / Kamchatka #1) (Sulfolobus islandicus).